The sequence spans 873 residues: Leucine--tRNA ligase (873 aa).

The 'HIGH' region motif lies at 48-58 (PYPSGKLHMGH). Residues 636-640 (KMSKS) carry the 'KMSKS' region motif. Lys-639 contributes to the ATP binding site.

It belongs to the class-I aminoacyl-tRNA synthetase family.

The protein resides in the cytoplasm. It carries out the reaction tRNA(Leu) + L-leucine + ATP = L-leucyl-tRNA(Leu) + AMP + diphosphate. The chain is Leucine--tRNA ligase from Cupriavidus metallidurans (strain ATCC 43123 / DSM 2839 / NBRC 102507 / CH34) (Ralstonia metallidurans).